The primary structure comprises 214 residues: ATP-dependent dethiobiotin synthetase BioD (214 aa).

Gly10–Tyr15 is an ATP binding site. Position 14 (Thr14) interacts with Mg(2+). Residue Lys35 is part of the active site. Thr39 contacts substrate. ATP is bound by residues Asp44, Glu109–Gly112, and Asn169–Cys170. Positions 44 and 109 each coordinate Mg(2+).

It belongs to the dethiobiotin synthetase family. Homodimer. Requires Mg(2+) as cofactor.

It localises to the cytoplasm. The catalysed reaction is (7R,8S)-7,8-diammoniononanoate + CO2 + ATP = (4R,5S)-dethiobiotin + ADP + phosphate + 3 H(+). Its pathway is cofactor biosynthesis; biotin biosynthesis; biotin from 7,8-diaminononanoate: step 1/2. Functionally, catalyzes a mechanistically unusual reaction, the ATP-dependent insertion of CO2 between the N7 and N8 nitrogen atoms of 7,8-diaminopelargonic acid (DAPA, also called 7,8-diammoniononanoate) to form a ureido ring. The polypeptide is ATP-dependent dethiobiotin synthetase BioD (Methanocaldococcus jannaschii (strain ATCC 43067 / DSM 2661 / JAL-1 / JCM 10045 / NBRC 100440) (Methanococcus jannaschii)).